Here is a 714-residue protein sequence, read N- to C-terminus: Glycine--tRNA ligase beta subunit (714 aa).

The protein belongs to the class-II aminoacyl-tRNA synthetase family. In terms of assembly, tetramer of two alpha and two beta subunits.

It is found in the cytoplasm. It catalyses the reaction tRNA(Gly) + glycine + ATP = glycyl-tRNA(Gly) + AMP + diphosphate. The sequence is that of Glycine--tRNA ligase beta subunit from Rhodospirillum centenum (strain ATCC 51521 / SW).